An 89-amino-acid polypeptide reads, in one-letter code: Small ribosomal subunit protein uS15 (89 aa).

A compositionally biased stretch (basic and acidic residues) spans 1 to 20 (MSITQERKSALIAEHARGKT). The disordered stretch occupies residues 1–24 (MSITQERKSALIAEHARGKTDTGS).

This sequence belongs to the universal ribosomal protein uS15 family. As to quaternary structure, part of the 30S ribosomal subunit. Forms a bridge to the 50S subunit in the 70S ribosome, contacting the 23S rRNA.

Functionally, one of the primary rRNA binding proteins, it binds directly to 16S rRNA where it helps nucleate assembly of the platform of the 30S subunit by binding and bridging several RNA helices of the 16S rRNA. In terms of biological role, forms an intersubunit bridge (bridge B4) with the 23S rRNA of the 50S subunit in the ribosome. This Maricaulis maris (strain MCS10) (Caulobacter maris) protein is Small ribosomal subunit protein uS15.